A 269-amino-acid chain; its full sequence is 2' cyclic ADP-D-ribose synthase AbTIR (269 aa).

Positions 31-99 (LKTKLSEISR…KQQKDEIEHQ (69 aa)) form a coiled coil. The 134-residue stretch at 133–266 (PEYDLFISHA…EIAHQLADVI (134 aa)) folds into the TIR domain. Residues Ser143, Lys172, and Lys202 each coordinate NAD(+). Glu208 is an active-site residue. Lys245 contributes to the NAD(+) binding site.

As to quaternary structure, homodimer. In the presence of NAD(+) analog 8-amino-isoquinoline adenine dinucleotide (3AD) forms filaments with 3AD between monomers; conformational changes occur upon 3AD binding.

It catalyses the reaction NAD(+) = 2'cADPR + nicotinamide + H(+). The enzyme catalyses NAD(+) + H2O = ADP-D-ribose + nicotinamide + H(+). It carries out the reaction NADP(+) + H2O = ADP-D-ribose 2'-phosphate + nicotinamide + H(+). Functionally, NAD(+) hydrolase (NADase) that catalyzes cleavage of NAD(+) into ADP-D-ribose (ADPR) and nicotinamide. In addition to ADPR, also generates a cyclization variant of cyclic ADPR (cADPR), termed 2'cADPR (v-cADPR). Cleaves NADP(+), but does not cyclize the product. The polypeptide is 2' cyclic ADP-D-ribose synthase AbTIR (Acinetobacter baumannii (strain 1295743)).